The following is a 187-amino-acid chain: Imidazoleglycerol-phosphate dehydratase (187 aa).

This sequence belongs to the imidazoleglycerol-phosphate dehydratase family.

It is found in the cytoplasm. It catalyses the reaction D-erythro-1-(imidazol-4-yl)glycerol 3-phosphate = 3-(imidazol-4-yl)-2-oxopropyl phosphate + H2O. It participates in amino-acid biosynthesis; L-histidine biosynthesis; L-histidine from 5-phospho-alpha-D-ribose 1-diphosphate: step 6/9. The sequence is that of Imidazoleglycerol-phosphate dehydratase from Pyrobaculum calidifontis (strain DSM 21063 / JCM 11548 / VA1).